Consider the following 754-residue polypeptide: Lysophospholipase 3 (754 aa).

A signal peptide spans methionine 1 to alanine 19. Composition is skewed to low complexity over residues serine 25–glycine 40 and leucine 50–serine 88. Residues serine 25–serine 88 form a disordered region. 16 N-linked (GlcNAc...) asparagine glycosylation sites follow: asparagine 112, asparagine 156, asparagine 174, asparagine 317, asparagine 325, asparagine 354, asparagine 391, asparagine 423, asparagine 470, asparagine 510, asparagine 515, asparagine 560, asparagine 577, asparagine 597, asparagine 625, and asparagine 631. In terms of domain architecture, PLA2c spans threonine 114–lysine 670. Low complexity predominate over residues lysine 687–serine 721. The segment at lysine 687–glycine 727 is disordered.

It belongs to the lysophospholipase family.

It localises to the secreted. It catalyses the reaction a 1-acyl-sn-glycero-3-phosphocholine + H2O = sn-glycerol 3-phosphocholine + a fatty acid + H(+). In terms of biological role, catalyzes the release of fatty acids from lysophospholipids. Phospholipase B may well contribute to pathogenicity by abetting the fungus in damaging and traversing host cell membranes, processes which likely increase the rapidity of disseminated infection. The polypeptide is Lysophospholipase 3 (PLB3) (Candida albicans (Yeast)).